The following is a 36-amino-acid chain: Protein usd (36 aa).

In terms of biological role, required for translation of SpoIIID. This chain is Protein usd (usd), found in Bacillus subtilis (strain 168).